The sequence spans 98 residues: NADH-ubiquinone oxidoreductase chain 4L (98 aa).

Transmembrane regions (helical) follow at residues 1–21 (MSMV…GLLM), 29–49 (SLLC…VTIL), and 61–81 (IILL…LVMV).

The protein belongs to the complex I subunit 4L family. In terms of assembly, core subunit of respiratory chain NADH dehydrogenase (Complex I) which is composed of 45 different subunits.

It localises to the mitochondrion inner membrane. It catalyses the reaction a ubiquinone + NADH + 5 H(+)(in) = a ubiquinol + NAD(+) + 4 H(+)(out). Functionally, core subunit of the mitochondrial membrane respiratory chain NADH dehydrogenase (Complex I) which catalyzes electron transfer from NADH through the respiratory chain, using ubiquinone as an electron acceptor. Part of the enzyme membrane arm which is embedded in the lipid bilayer and involved in proton translocation. In Phoca fasciata (Ribbon seal), this protein is NADH-ubiquinone oxidoreductase chain 4L (MT-ND4L).